Reading from the N-terminus, the 305-residue chain is Probable xyloglucan endotransglucosylase/hydrolase protein 21 (305 aa).

Residues 1–25 (MVSSTLLVMSISLFLGLSILLVVHG) form the signal peptide. In terms of domain architecture, GH16 spans 26–216 (KDFNQDIDIT…WSQGPFVASF (191 aa)). Asparagine 46 carries an N-linked (GlcNAc...) asparagine glycan. Catalysis depends on glutamate 102, which acts as the Nucleophile. Glutamate 106 serves as the catalytic Proton donor. Glutamate 106 serves as a coordination point for xyloglucan. N-linked (GlcNAc...) asparagine glycosylation occurs at asparagine 110. Xyloglucan-binding positions include 119–121 (HTN) and 129–131 (DRE). A glycan (N-linked (GlcNAc...) asparagine) is linked at asparagine 146. Xyloglucan is bound by residues 195-196 (DW) and glycine 200. Asparagine 206 and asparagine 231 each carry an N-linked (GlcNAc...) asparagine glycan. Cystine bridges form between cysteine 225-cysteine 239 and cysteine 282-cysteine 296. Residues 236-253 (TSPCSPGDSTSSSSSSTS) show a composition bias toward low complexity. Residues 236-258 (TSPCSPGDSTSSSSSSTSEWFSQ) form a disordered region. Arginine 287 lines the xyloglucan pocket.

Belongs to the glycosyl hydrolase 16 family. XTH group 2 subfamily. Post-translationally, contains at least one intrachain disulfide bond essential for its enzymatic activity. Predominantly expressed in green siliques.

The protein localises to the secreted. The protein resides in the cell wall. Its subcellular location is the extracellular space. It localises to the apoplast. It catalyses the reaction breaks a beta-(1-&gt;4) bond in the backbone of a xyloglucan and transfers the xyloglucanyl segment on to O-4 of the non-reducing terminal glucose residue of an acceptor, which can be a xyloglucan or an oligosaccharide of xyloglucan.. Its function is as follows. Catalyzes xyloglucan endohydrolysis (XEH) and/or endotransglycosylation (XET). Cleaves and religates xyloglucan polymers, an essential constituent of the primary cell wall, and thereby participates in cell wall construction of growing tissues. The protein is Probable xyloglucan endotransglucosylase/hydrolase protein 21 (XTH21) of Arabidopsis thaliana (Mouse-ear cress).